The sequence spans 328 residues: Protease HtpX homolog (328 aa).

Helical transmembrane passes span 6–26 (TAML…LIGG) and 28–48 (SGMM…YWNS). Histidine 130 is a binding site for Zn(2+). The active site involves glutamate 131. Histidine 134 provides a ligand contact to Zn(2+). A run of 2 helical transmembrane segments spans residues 145–165 (ITAT…FFGG) and 172–192 (PLGA…AMLV). Glutamate 201 provides a ligand contact to Zn(2+). The tract at residues 279–328 (QYGGGTGPSVGTPTRSGSTGPAMTANPERKSRSVPNTGRGGSQPPKGPWS) is disordered. Residues 287 to 299 (SVGTPTRSGSTGP) show a composition bias toward low complexity.

The protein belongs to the peptidase M48B family. The cofactor is Zn(2+).

It is found in the cell inner membrane. This is Protease HtpX homolog from Rhizobium rhizogenes (strain K84 / ATCC BAA-868) (Agrobacterium radiobacter).